We begin with the raw amino-acid sequence, 82 residues long: Small ribosomal subunit protein bS16 (82 aa).

Belongs to the bacterial ribosomal protein bS16 family.

This Pectobacterium atrosepticum (strain SCRI 1043 / ATCC BAA-672) (Erwinia carotovora subsp. atroseptica) protein is Small ribosomal subunit protein bS16.